We begin with the raw amino-acid sequence, 382 residues long: Solvent efflux pump periplasmic linker SrpA (382 aa).

The N-terminal stretch at Met1–Gly23 is a signal peptide. The N-palmitoyl cysteine moiety is linked to residue Cys24. Cys24 carries the S-diacylglycerol cysteine lipid modification. The stretch at Arg98–Thr127 forms a coiled coil.

This sequence belongs to the membrane fusion protein (MFP) (TC 8.A.1) family.

The protein localises to the cell inner membrane. Functionally, the periplasmic linker protein component of an organic solvent efflux pump. Involved in export of a number of low log POW compounds including hexane (log POW 3.5), toluene (log POW 2.5) and dimethylphthalate (log POW 2.3). The solvent resistance phenotype has been postulated to depend on the operon expression level. The chain is Solvent efflux pump periplasmic linker SrpA (srpA) from Pseudomonas putida (Arthrobacter siderocapsulatus).